A 1242-amino-acid polypeptide reads, in one-letter code: MASPPESDGFSDVRKVGYLRKPKSMHKRFFVLRAASEAGGPARLEYYENEKKWRHKSSAPKRSIPLESCFNINKRADSKNKHLVALYTRDEHFAIAADSEAEQDSWYQALLQLHNRAKGHHDGAAALGAGGGGGSCSGSSGLGEAGEDLSYGDVPPGPAFKEVWQVILKPKGLGQTKNLIGIYRLCLTSKTISFVKLNSEAAAVVLQLMNIRRCGHSENFFFIEVGRSAVTGPGEFWMQVDDSVVAQNMHETILEAMRAMSDEFRPRSKSQSSSNCSNPISVPLRRHHLNNPPPSQVGLTRRSRTESITATSPASMVGGKPGSFRVRASSDGEGTMSRPASVDGSPVSPSTNRTHAHRHRGSARLHPPLNHSRSIPMPASRCSPSATSPVSLSSSSTSGHGSTSDCLFPRRSSASVSGSPSDGGFISSDEYGSSPCDFRSSFRSVTPDSLGHTPPARGEEELSNYICMGGKGPSTLTAPNGHYILSRGGNGHRCTPGTGLGTSPALAGDEAASAADLDNRFRKRTHSAGTSPTITHQKTPSQSSVASIEEYTEMMPAYPPGGGSGGRLPGHRHSAFVPTRSYPEEGLEMHPLERRGGHHRPDSSTLHTDDGYMPMSPGVAPVPSGRKGSGDYMPMSPKSVSAPQQIINPIRRHPQRVDPNGYMMMSPSGGCSPDIGGGPSSSSSSSNAVPSGTSYGKLWTNGVGGHHSHVLPHPKPPVESSGGKLLPCTGDYMNMSPVGDSNTSSPSDCYYGPEDPQHKPVLSYYSLPRSFKHTQRPGEPEEGARHQHLRLSTSSGRLLYAATADDSSSSTSSDSLGGGYCGARLEPSLPHPHHQVLQPHLPRKVDTAAQTNSRLARPTRLSLGDPKASTLPRAREQQQQQQPLLHPPEPKSPGEYVNIEFGSDQSGYLSGPVAFHSSPSVRCPSQLQPAPREEETGTEEYMKMDLGPGRRAAWQESTGVEMGRLGPAPPGAASICRPTRAVPSSRGDYMTMQMSCPRQSYVDTSPAAPVSYADMRTGIAAEEVSLPRATMAAASSSSAASASPTGPQGAAELAAHSSLLGGPQGPGGMSAFTRVNLSPNRNQSAKVIRADPQGCRRRHSSETFSSTPSATRVGNTVPFGAGAAVGGGGGSSSSSEDVKRHSSASFENVWLRPGELGGAPKEPAKLCGAAGGLENGLNYIDLDLVKDFKQCPQECTPEPQPPPPPPPHQPLGSGESSSTRRSSEDLSAYASISFQKQPEDRQ.

The residue at position 3 (serine 3) is a Phosphoserine. The segment at 3-137 is mediates interaction with PHIP; that stretch reads SPPESDGFSD…GAGGGGGSCS (135 aa). The region spanning 12–115 is the PH domain; it reads DVRKVGYLRK…WYQALLQLHN (104 aa). Residue serine 99 is modified to Phosphoserine; by CK2. Positions 160–264 constitute an IRS-type PTB domain; it reads FKEVWQVILK…EAMRAMSDEF (105 aa). A disordered region spans residues 262–430; the sequence is DEFRPRSKSQ…SDGGFISSDE (169 aa). Over residues 269-281 the composition is skewed to low complexity; that stretch reads KSQSSSNCSNPIS. 2 positions are modified to phosphoserine; by RPS6KB1: serine 270 and serine 307. Serine 312 bears the Phosphoserine; by IKKB, MAPK8 and RPS6KB1 mark. A phosphoserine mark is found at serine 315, serine 323, serine 330, serine 345, and serine 348. Basic residues predominate over residues 354-363; the sequence is THAHRHRGSA. 2 stretches are compositionally biased toward low complexity: residues 383-404 and 412-424; these read SPSA…GSTS and SSAS…SDGG. Serine 419 is subject to Phosphoserine. A phosphothreonine mark is found at threonine 446 and threonine 453. At tyrosine 465 the chain carries Phosphotyrosine; by INSR. Positions 465-468 match the YXXM motif 1 motif; the sequence is YICM. A Phosphoserine; by RPS6KB1 modification is found at serine 527. The YXXM motif 2 signature appears at 551 to 554; it reads YTEM. The segment covering 592–610 has biased composition (basic and acidic residues); sequence LERRGGHHRPDSSTLHTDD. The tract at residues 592–616 is disordered; the sequence is LERRGGHHRPDSSTLHTDDGYMPMS. Tyrosine 612 carries the phosphotyrosine; by INSR modification. The short motif at 612–615 is the YXXM motif 3 element; sequence YMPM. A phosphoserine mark is found at serine 616 and serine 629. Tyrosine 632 bears the Phosphotyrosine; by INSR mark. The short motif at 632 to 635 is the YXXM motif 4 element; it reads YMPM. Residue serine 636 is modified to Phosphoserine; by RPS6KB1. Position 662 is a phosphotyrosine (tyrosine 662). The YXXM motif 5 signature appears at 662 to 665; the sequence is YMMM. Residues 668 to 693 form a disordered region; the sequence is SGGCSPDIGGGPSSSSSSSNAVPSGT. The YXXM motif 6 signature appears at 732–735; the sequence is YMNM. 2 disordered regions span residues 771 to 900 and 918 to 937; these read FKHT…VNIE and SPSV…EETG. Residues 776 to 785 are compositionally biased toward basic and acidic residues; sequence RPGEPEEGAR. Position 794 is a phosphoserine; by AMPK and SIK2 (serine 794). Low complexity predominate over residues 801 to 815; that stretch reads AATADDSSSSTSSDS. Serine 892 carries the post-translational modification Phosphoserine. Phosphotyrosine; by INSR is present on tyrosine 896. The tract at residues 896 to 898 is GRB2-binding; that stretch reads YVN. Positions 918-928 are enriched in polar residues; that stretch reads SPSVRCPSQLQ. A phosphotyrosine; by INSR mark is found at tyrosine 941 and tyrosine 989. 3 short sequence motifs (YXXM motif) span residues 941-944, 989-992, and 1012-1015; these read YMKM, YMTM, and YADM. A disordered region spans residues 1057-1146; the sequence is SSLLGGPQGP…DVKRHSSASF (90 aa). Positions 1073 to 1085 are enriched in polar residues; that stretch reads TRVNLSPNRNQSA. Serine 1100 carries the post-translational modification Phosphoserine. Phosphoserine; by RPS6KB1 and PKC/PRKCQ is present on serine 1101. Residues 1102–1114 are compositionally biased toward polar residues; the sequence is ETFSSTPSATRVG. Phosphotyrosine; by INSR is present on tyrosine 1179. Glycyl lysine isopeptide (Lys-Gly) (interchain with G-Cter in ubiquitin) cross-links involve residues lysine 1186 and lysine 1189. The disordered stretch occupies residues 1190–1242; the sequence is QCPQECTPEPQPPPPPPPHQPLGSGESSSTRRSSEDLSAYASISFQKQPEDRQ. Residues 1198–1209 show a composition bias toward pro residues; it reads EPQPPPPPPPHQ. A compositionally biased stretch (low complexity) spans 1210–1220; it reads PLGSGESSSTR. Tyrosine 1229 carries the phosphotyrosine; by INSR modification.

Interacts with UBTF and PIK3CA. Interacts (via phosphorylated YXXM motifs) with PIK3R1. Interacts with ROCK1 and FER. Interacts (via PH domain) with PHIP. Interacts with GRB2. Interacts with SOCS7. Interacts (via IRS-type PTB domain) with IGF1R and INSR (via the tyrosine-phosphorylated NPXY motif). Interacts with ALK. Interacts with EIF2AK2/PKR. Interacts with GKAP1. Interacts with DGKZ in the absence of insulin; insulin stimulation decreases this interaction. Found in a ternary complex with DGKZ and PIP5K1A in the absence of insulin stimulation. Interacts with SQSTM1; the interaction is disrupted by the presence of tensin TNS2. Interacts with NCK1 (via SH2 domain). Interacts with NCK2 (via SH3 domain). Interacts with SH2B1; this interaction enhances leptin-induced activation of the PI3-kinase pathway. Interacts with DVL2; this interaction promotes the Wnt/beta-catenin signaling pathway. In terms of processing, serine phosphorylation of IRS1 is a mechanism for insulin resistance. Ser-307, Ser-312, Ser-315, and Ser-323 phosphorylations inhibit insulin action through disruption of IRS1 interaction with the insulin receptor INSR. Phosphorylation of Tyr-896 is required for GRB2-binding. Phosphorylated by ALK. Phosphorylated at Ser-270, Ser-307, Ser-636 and Ser-1101 by RPS6KB1; phosphorylation induces accelerated degradation of IRS1. Phosphorylated on tyrosine residues in response to insulin. In skeletal muscles, dephosphorylated on Tyr-612 by TNS2 under anabolic conditions; dephosphorylation results in the proteasomal degradation of IRS1. Post-translationally, ubiquitinated by the Cul7-RING(FBXW8) complex in a mTOR-dependent manner, leading to its degradation: the Cul7-RING(FBXW8) complex recognizes and binds IRS1 previously phosphorylated by S6 kinase (RPS6KB1 or RPS6KB2). Ubiquitinated by TRAF4 through 'Lys-29' linkage; this ubiquitination regulates the interaction of IRS1 with IGFR and IRS1 tyrosine phosphorylation upon IGF1 stimulation. S-nitrosylation at by BLVRB inhibits its activity.

Its subcellular location is the cytoplasm. It is found in the nucleus. In terms of biological role, signaling adapter protein that participates in the signal transduction from two prominent receptor tyrosine kinases, insulin receptor/INSR and insulin-like growth factor I receptor/IGF1R. Plays therefore an important role in development, growth, glucose homeostasis as well as lipid metabolism. Upon phosphorylation by the insulin receptor, functions as a signaling scaffold that propagates insulin action through binding to SH2 domain-containing proteins including the p85 regulatory subunit of PI3K, NCK1, NCK2, GRB2 or SHP2. Recruitment of GRB2 leads to the activation of the guanine nucleotide exchange factor SOS1 which in turn triggers the Ras/Raf/MEK/MAPK signaling cascade. Activation of the PI3K/AKT pathway is responsible for most of insulin metabolic effects in the cell, and the Ras/Raf/MEK/MAPK is involved in the regulation of gene expression and in cooperation with the PI3K pathway regulates cell growth and differentiation. Acts a positive regulator of the Wnt/beta-catenin signaling pathway through suppression of DVL2 autophagy-mediated degradation leading to cell proliferation. The polypeptide is Insulin receptor substrate 1 (IRS1) (Homo sapiens (Human)).